A 153-amino-acid polypeptide reads, in one-letter code: Small ribosomal subunit protein uS13 (153 aa).

The protein belongs to the universal ribosomal protein uS13 family. In terms of assembly, part of the 30S ribosomal subunit. Forms a loose heterodimer with protein S19. Forms two bridges to the 50S subunit in the 70S ribosome.

Functionally, located at the top of the head of the 30S subunit, it contacts several helices of the 16S rRNA. In the 70S ribosome it contacts the 23S rRNA (bridge B1a) and protein L5 of the 50S subunit (bridge B1b), connecting the 2 subunits; these bridges are implicated in subunit movement. The chain is Small ribosomal subunit protein uS13 from Pyrobaculum islandicum (strain DSM 4184 / JCM 9189 / GEO3).